Here is a 346-residue protein sequence, read N- to C-terminus: Peripherin-2 (346 aa).

The Cytoplasmic portion of the chain corresponds to 1–24 (MALLKVKFDQKKRVKLAQGLWLMN). The helical transmembrane segment at 25–43 (WLSVLAGIVIFSLGLFLKI) threads the bilayer. Topologically, residues 44-61 (ELRKRSDVMNNSESHFVP) are lumenal. An N-linked (GlcNAc...) asparagine glycan is attached at Asn-53. Residues 62 to 80 (NSLIGMGVLSCVFNSLAGK) form a helical membrane-spanning segment. Residues 81-99 (ICYDALDPSKYAKWKPWLK) are Cytoplasmic-facing. The helical transmembrane segment at 100-123 (SYLVVCVLFNIVLFLVALCCFLMR) threads the bilayer. The Lumenal segment spans residues 124–264 (GSLESTLAQG…LSYYGSLMNS (141 aa)). The N-linked (GlcNAc...) asparagine glycan is linked to Asn-229. Residues 265–290 (MGAVTLLVWLFEVSITIGLRYLHTAL) form a helical membrane-spanning segment. The Cytoplasmic segment spans residues 291-346 (EGVSNPEDLECESEGWLLEKSVSETWKAFLESLKKLGKSNQVEAEGADAGQAPEAG). The segment at 341–346 (QAPEAG) is interaction with MREG.

It belongs to the PRPH2/ROM1 family. In terms of assembly, homodimer; disulfide-linked. Forms a homotetramer. Forms a heterotetramer with ROM1. Homotetramer and heterotetramer core complexes go on to form higher order complexes by formation of intermolecular disulfide bonds. Interacts with MREG. Interacts with STX3. Interacts with SNAP25. In terms of tissue distribution, retina (photoreceptor). In rim region of ROS (rod outer segment) disks.

It localises to the membrane. It is found in the cell projection. The protein resides in the cilium. The protein localises to the photoreceptor outer segment. Its subcellular location is the photoreceptor inner segment. In terms of biological role, essential for retina photoreceptor outer segment disk morphogenesis, may also play a role with ROM1 in the maintenance of outer segment disk structure. Required for the maintenance of retinal outer nuclear layer thickness. Required for the correct development and organization of the photoreceptor inner segment. The protein is Peripherin-2 (PRPH2) of Felis catus (Cat).